The chain runs to 88 residues: Elongation factor 1-beta (88 aa).

It belongs to the EF-1-beta/EF-1-delta family.

Its function is as follows. Promotes the exchange of GDP for GTP in EF-1-alpha/GDP, thus allowing the regeneration of EF-1-alpha/GTP that could then be used to form the ternary complex EF-1-alpha/GTP/AAtRNA. This chain is Elongation factor 1-beta (ef1b), found in Archaeoglobus fulgidus (strain ATCC 49558 / DSM 4304 / JCM 9628 / NBRC 100126 / VC-16).